Here is a 498-residue protein sequence, read N- to C-terminus: MSSKQEKTKARLPRGFIDRTSAQLYATETMIAQIREVYELYGFEALETPIFEYTDVLGKFLPDEDRPNAGVFSLQDEDEQWMSLRYDLTAPLARYFAENFEILPKPYRSYRLGFVFRNEKPGPGRFRQFMQFDADIVGTPTVAADAEICMMAADSLEKLGFQHHDYVIRLNNRKILEAVLEQIGLVGREKAEKRLTVLRAIDKLDKFGLEGVRLLLGKGRLDESGDFTKGAQLKDQEIDSVLALLTGEAETAEETLDALRHVVGHHIQGLEGVRELEEMQAIFAANGYQNRIKIDPSVVRGLEYYTGPVFEATLLFDVLNDDGQKVVFGSIGGGGRYDGLVARFRGENVPATGFSIGISRLITALQNLSKLPVKKTPGPVVVLMMDREPEAVAQYQKMVMQLRKAGIRAELYLGASGIKAQMKYADRRQAPCVVIQGSQERQDRKIQIKDLIEGTRLSREIKDNQTWRESRPAQITVDEERLVQAVQDILISQNAQKF.

Belongs to the class-II aminoacyl-tRNA synthetase family. As to quaternary structure, homodimer.

Its subcellular location is the cytoplasm. It catalyses the reaction tRNA(His) + L-histidine + ATP = L-histidyl-tRNA(His) + AMP + diphosphate + H(+). In Bartonella quintana (strain Toulouse) (Rochalimaea quintana), this protein is Histidine--tRNA ligase.